Reading from the N-terminus, the 671-residue chain is Oviduct-specific glycoprotein (671 aa).

Positions 1–21 (MGRLLLWVGLVLLMKPNDGTA) are cleaved as a signal peptide. Residues 22 to 385 (YKLVCYFTNW…HILNELLVRA (364 aa)) enclose the GH18 domain. The cysteines at positions 26 and 51 are disulfide-linked. Residues 71 to 72 (LQ), 98 to 101 (GGWN), Tyr-142, 211 to 214 (LSYD), and Trp-355 each bind chitin. N-linked (GlcNAc...) asparagine glycosylation is present at Asn-402. Tandem repeats lie at residues 490–504 (TGMT…AGRE), 505–519 (TMTT…PGGE), 520–534 (TMTT…PGGE), 535–549 (TVTT…PGGE), 550–564 (TMTT…PGGE), 565–579 (TVTI…PVGE), 580–594 (TVTI…PGGQ), and 595–609 (TTAT…PPGM). The segment at 490-609 (TGMTVTVQTQ…GSQSVTPPGM (120 aa)) is 8 X 15 AA tandem repeats. N-linked (GlcNAc...) asparagine glycans are attached at residues Asn-511, Asn-526, Asn-541, Asn-556, Asn-571, and Asn-586.

It belongs to the glycosyl hydrolase 18 family. Post-translationally, highly O-glycosylated and also N-glycosylated. Oviduct.

The protein localises to the cytoplasmic vesicle. Its subcellular location is the secretory vesicle. Functionally, binds to oocyte zona pellucida in vivo. May play a role in the fertilization process and/or early embryonic development. Might act as a protective secretion influencing the first steps of the reproductive process necessary for the normal triggering of fertilization and early embryonic development. The polypeptide is Oviduct-specific glycoprotein (OVGP1) (Mesocricetus auratus (Golden hamster)).